The chain runs to 284 residues: Nucleotide-binding protein Shal_3708 (284 aa).

Position 8 to 15 (8 to 15 (GRSGSGKS)) interacts with ATP. Residue 56–59 (DIRN) coordinates GTP.

It belongs to the RapZ-like family.

Its function is as follows. Displays ATPase and GTPase activities. The chain is Nucleotide-binding protein Shal_3708 from Shewanella halifaxensis (strain HAW-EB4).